The sequence spans 557 residues: Potassium-transporting ATPase potassium-binding subunit (557 aa).

12 helical membrane passes run 5-25 (GFLL…PLGS), 63-83 (LSAI…MLLG), 132-152 (GLTV…FALI), 170-190 (LLRI…LFFI), 253-273 (FVQM…FGEV), 283-303 (LLWA…WAEV), 329-349 (VLVS…AVIA), 356-376 (ALGG…FGGV), 379-399 (GLYG…LMIG), 416-436 (LTAL…ALAM), 484-504 (LLAL…MAIA), and 526-546 (LFVG…FIPA).

It belongs to the KdpA family. The system is composed of three essential subunits: KdpA, KdpB and KdpC.

It localises to the cell inner membrane. Part of the high-affinity ATP-driven potassium transport (or Kdp) system, which catalyzes the hydrolysis of ATP coupled with the electrogenic transport of potassium into the cytoplasm. This subunit binds the periplasmic potassium ions and delivers the ions to the membrane domain of KdpB through an intramembrane tunnel. This is Potassium-transporting ATPase potassium-binding subunit from Escherichia coli (strain UTI89 / UPEC).